A 1506-amino-acid chain; its full sequence is Gag-Pol polyprotein (1506 aa).

2 consecutive CCHC-type zinc fingers follow at residues 385–402 and 404–421; these read QKCY…QCRQ and IICH…DCRQ. Residues 459–530 enclose the Peptidase A2 domain; the sequence is KKLLVDTGAD…SPVEVLGRDN (72 aa). The active-site Protease; shared with dimeric partner is aspartate 464. One can recognise a Reverse transcriptase domain in the interval 587-776; it reads EGKVGRAPPH…YPAKWLGFEL (190 aa). Aspartate 652, aspartate 727, aspartate 728, aspartate 980, glutamate 1012, aspartate 1032, and aspartate 1085 together coordinate Mg(2+). The 123-residue stretch at 971–1093 folds into the RNase H type-1 domain; that stretch reads VVPGPTYYTD…IDRYISEIFL (123 aa). The Integrase-type zinc-finger motif lies at 1228–1269; it reads ENIPLAEEEHNKWHQDAVSLHLEFGIPRTAAEDIVQQCDVCQ. Residues histidine 1237, histidine 1241, cysteine 1265, and cysteine 1268 each contribute to the Zn(2+) site. The 161-residue stretch at 1270-1430 folds into the Integrase catalytic domain; sequence ENKMPSTLRG…SPMDIFIFNK (161 aa). Residues aspartate 1291, aspartate 1343, and glutamate 1379 each coordinate Mg(2+). The segment at residues 1447-1499 is a DNA-binding region (integrase-type); that stretch reads RFCYYRTRKRGHPGEWQGPTQVLWGGDGAIVVKDRGTDRYLVIANKDVKFIPP.

It belongs to the retroviral Pol polyprotein family. Homotetramer; further associates as a homohexadecamer. The cofactor is Mg(2+). In terms of processing, specific enzymatic cleavages by the viral protease yield mature proteins.

The protein resides in the virion. The enzyme catalyses Endonucleolytic cleavage to 5'-phosphomonoester.. It catalyses the reaction 3'-end directed exonucleolytic cleavage of viral RNA-DNA hybrid.. The catalysed reaction is dUTP + H2O = dUMP + diphosphate + H(+). It carries out the reaction DNA(n) + a 2'-deoxyribonucleoside 5'-triphosphate = DNA(n+1) + diphosphate. Mediates, with Gag polyprotein, the essential events in virion assembly, including binding the plasma membrane, making the protein-protein interactions necessary to create spherical particles, recruiting the viral Env proteins, and packaging the genomic RNA via direct interactions with the RNA packaging sequence. In terms of biological role, targets the polyprotein to the plasma membrane. Functionally, forms the core that encapsulates the genomic RNA-nucleocapsid complex in the virion. Its function is as follows. Encapsulates and protects viral dimeric unspliced genomic RNA (gRNA). Binds these RNAs through its zinc fingers. Acts as a nucleic acid chaperone which is involved in rearrangement of nucleic acid secondary structure during gRNA retrotranscription. Also facilitates template switch leading to recombination. The aspartyl protease mediates proteolytic cleavages of Gag and Gag-Pol polyproteins during or shortly after the release of the virion from the plasma membrane. Cleavages take place as an ordered, step-wise cascade to yield mature proteins. This process is called maturation. Displays maximal activity during the budding process just prior to particle release from the cell. In terms of biological role, RT is a multifunctional enzyme that converts the viral dimeric RNA genome into dsDNA in the cytoplasm, shortly after virus entry into the cell. This enzyme displays a DNA polymerase activity that can copy either DNA or RNA templates, and a ribonuclease H (RNase H) activity that cleaves the RNA strand of RNA-DNA heteroduplexes in a partially processive 3' to 5' endonucleasic mode. Conversion of viral genomic RNA into dsDNA requires many steps. A tRNA-Trp binds to the primer-binding site (PBS) situated at the 5' end of the viral RNA. RT uses the 3' end of the tRNA primer to perfom a short round of RNA-dependent minus-strand DNA synthesis. The reading proceeds through the U5 region and ends after the repeated (R) region which is present at both ends of viral RNA. The portion of the RNA-DNA heteroduplex is digested by the RNase H, resulting in a ssDNA product attached to the tRNA primer. This ssDNA/tRNA hybridizes with the identical R region situated at the 3' end of viral RNA. This template exchange, known as minus-strand DNA strong stop transfer, can be either intra- or intermolecular. RT uses the 3' end of this newly synthesized short ssDNA to perfom the RNA-dependent minus-strand DNA synthesis of the whole template. RNase H digests the RNA template except for a polypurine tract (PPT) situated at the 5' end of the genome. It is not clear if both polymerase and RNase H activities are simultaneous. RNase H probably can proceed both in a polymerase-dependent (RNA cut into small fragments by the same RT performing DNA synthesis) and a polymerase-independent mode (cleavage of remaining RNA fragments by free RTs). Secondly, RT performs DNA-directed plus-strand DNA synthesis using the PPT that has not been removed by RNase H as primers. PPT and tRNA primers are then removed by RNase H. The 3' and 5' ssDNA PBS regions hybridize to form a circular dsDNA intermediate. Strand displacement synthesis by RT to the PBS and PPT ends produces a blunt ended, linear dsDNA copy of the viral genome that includes long terminal repeats (LTRs) at both ends. Functionally, catalyzes viral DNA integration into the host chromosome, by performing a series of DNA cutting and joining reactions. This Ovis aries (Sheep) protein is Gag-Pol polyprotein (pol).